The sequence spans 260 residues: Carbonic anhydrase 2 (260 aa).

Residues 3–259 (HHWGYDSHNG…LKSREVRASF (257 aa)) enclose the Alpha-carbonic anhydrase domain. The active-site Proton donor/acceptor is the His64. His94, His96, and His119 together coordinate Zn(2+). 198 to 199 (TT) contacts substrate.

The protein belongs to the alpha-carbonic anhydrase family. It depends on Zn(2+) as a cofactor.

The protein resides in the cytoplasm. It localises to the cell membrane. It catalyses the reaction hydrogencarbonate + H(+) = CO2 + H2O. The catalysed reaction is urea = cyanamide + H2O. With respect to regulation, inhibited by acetazolamide. Functionally, catalyzes the reversible hydration of carbon dioxide. Can also hydrate cyanamide to urea. The protein is Carbonic anhydrase 2 (CA2) of Gallus gallus (Chicken).